Here is a 300-residue protein sequence, read N- to C-terminus: MIQTERAVQQVLEWGRSLTGFADEHAVEAVRGGQYILQRIHPSLRGTSARTGRDPQDETLIVTFYRELALLFWLDDCNDLGLISPEQLAAVEQALGQGVPCALPGFEGCAVLRASLATLAYDRRDYAQLLDDTRCYSAALRAGHAQAVAAERWSYAEYLHNGIDSIAYANVFCCLSLLWGLDMATLRARPAFRQVLRLISAIGRLQNDLHGCDKDRSAGEADNAVILLLQRYPAMPVVEFLNDELAGHTRMLHRVMAEERFPAPWGPLIEAMAAIRVQYYRTSTSRYRSDAVRGGQRAPA.

This is an uncharacterized protein from Bradyrhizobium diazoefficiens (strain JCM 10833 / BCRC 13528 / IAM 13628 / NBRC 14792 / USDA 110).